The sequence spans 323 residues: tRNA(Ile)-lysidine synthase (323 aa).

33 to 38 (SGGPDS) contacts ATP.

Belongs to the tRNA(Ile)-lysidine synthase family.

The protein localises to the cytoplasm. The catalysed reaction is cytidine(34) in tRNA(Ile2) + L-lysine + ATP = lysidine(34) in tRNA(Ile2) + AMP + diphosphate + H(+). Ligates lysine onto the cytidine present at position 34 of the AUA codon-specific tRNA(Ile) that contains the anticodon CAU, in an ATP-dependent manner. Cytidine is converted to lysidine, thus changing the amino acid specificity of the tRNA from methionine to isoleucine. The polypeptide is tRNA(Ile)-lysidine synthase (Mycobacterium bovis (strain ATCC BAA-935 / AF2122/97)).